The chain runs to 1574 residues: Sterol 3-beta-glucosyltransferase (1574 aa).

A compositionally biased stretch (polar residues) spans 37–48 (TFLNQNPASPNN). Disordered stretches follow at residues 37–61 (TFLN…NKDE) and 102–170 (ASNA…HSKL). Basic and acidic residues-rich tracts occupy residues 107-121 (EAKD…RSSR) and 128-138 (PEYRREYKLDY). The segment covering 139 to 148 (DIDESEEDDI) has biased composition (acidic residues). Residues 149 to 170 (ESTRDENTLKPKTEDTSVHSKL) show a composition bias toward basic and acidic residues. The GRAM 1 domain maps to 253–288 (DKLKRVFELNDDDYFYGNYNVWLVRDVLLQGHIYLT). Positions 323 to 471 (DVIQSGSLGM…WVNNIVKVVF (149 aa)) constitute a PH domain. 4 disordered regions span residues 389–413 (GRND…SGDE), 538–559 (RMKK…GNEP), 651–722 (ASHR…PVQG), and 774–806 (DALS…KKKN). Polar residues predominate over residues 692 to 701 (ITPSKIFSNK). Over residues 702–711 (SRTESEKSTP) the composition is skewed to basic and acidic residues. Residues 712 to 722 (DRSQTTSPVQG) show a composition bias toward polar residues. One can recognise a GRAM 2 domain in the interval 854-920 (RHFQERFSFN…IDVDTCSKEK (67 aa)). A compositionally biased stretch (basic and acidic residues) spans 964–976 (RESGNESSDDNKS). Residues 964–996 (RESGNESSDDNKSAQHGKSGCFQKTPSSAETTK) are disordered. A compositionally biased stretch (polar residues) spans 985-996 (FQKTPSSAETTK). Positions 1057, 1058, 1060, 1333, 1364, 1366, 1379, 1382, 1383, 1384, 1403, and 1404 each coordinate UDP-alpha-D-glucose. The tract at residues 1505-1574 (DSDTYDADHD…DNTTVTDANK (70 aa)) is disordered. Basic and acidic residues predominate over residues 1510–1533 (DADHDSDKESDHDQTYEQDNHSDY). Residues 1563-1574 (GNDNTTVTDANK) show a composition bias toward polar residues.

Belongs to the glycosyltransferase 28 family.

The protein localises to the cytoplasm. Its subcellular location is the membrane. It carries out the reaction a sterol + UDP-alpha-D-glucose = a sterol 3-beta-D-glucoside + UDP + H(+). It catalyses the reaction ergosterol + UDP-alpha-D-glucose = ergosteryl 3-beta-D-glucoside + UDP + H(+). Functionally, sterol glycosyltransferase responsible for the glycosylation of ergosterol to form ergosterol-glucoside. This chain is Sterol 3-beta-glucosyltransferase, found in Debaryomyces hansenii (strain ATCC 36239 / CBS 767 / BCRC 21394 / JCM 1990 / NBRC 0083 / IGC 2968) (Yeast).